The chain runs to 187 residues: dCTP deaminase (187 aa).

DCTP contacts are provided by residues 110–115 (KSTYAR), 134–136 (TLE), Q155, Y169, and Q179. E136 (proton donor/acceptor) is an active-site residue.

The protein belongs to the dCTP deaminase family. Homotrimer.

It catalyses the reaction dCTP + H2O + H(+) = dUTP + NH4(+). The protein operates within pyrimidine metabolism; dUMP biosynthesis; dUMP from dCTP (dUTP route): step 1/2. In terms of biological role, catalyzes the deamination of dCTP to dUTP. This is dCTP deaminase from Bordetella petrii (strain ATCC BAA-461 / DSM 12804 / CCUG 43448).